We begin with the raw amino-acid sequence, 398 residues long: MAKEKYDRSKPHVNIGTIGHVDHGKTTLTAAITTVLARRLPSAVNQPKDYASIDAAPEERERGITINTAHVEYETAKRHYAHIDAPGHADYVKNMITGAAQMDGAILVVASTDGPMPQTREHILLSRQVGVKHLIVFMNKVDLVDDEELLELVEMEIRDLLSEYDFPGDDLPVIQGSALKALEGDSKYEDIIMELMDTVDEYIPEPERDTDKPLLLPVEDVFSITGRGTVASGRIDRGIVKVNDEIEIVGIKEEIQKAVVTGVEMFRKQLDEGLAGDNVGVLLRGIQRDEIERGQVIAKPGSINPHTKFKGEVYILTKEEGGRHTPFFNNYRPQFYFRTTDVTGSIELPAGTEMVMPGDNVTIDVELIHPIAVEQGTTFSIREGGRTVGSGMVTEIEA.

Residues 10 to 207 (KPHVNIGTIG…TVDEYIPEPE (198 aa)) form the tr-type G domain. The segment at 19 to 26 (GHVDHGKT) is G1. 19–26 (GHVDHGKT) is a GTP binding site. Residue T26 participates in Mg(2+) binding. The tract at residues 63–67 (GITIN) is G2. Residues 84-87 (DAPG) form a G3 region. Residues 84-88 (DAPGH) and 139-142 (NKVD) each bind GTP. Residues 139–142 (NKVD) are G4. Residues 177 to 179 (SAL) are G5.

The protein belongs to the TRAFAC class translation factor GTPase superfamily. Classic translation factor GTPase family. EF-Tu/EF-1A subfamily. In terms of assembly, monomer.

The protein localises to the cytoplasm. It catalyses the reaction GTP + H2O = GDP + phosphate + H(+). Its function is as follows. GTP hydrolase that promotes the GTP-dependent binding of aminoacyl-tRNA to the A-site of ribosomes during protein biosynthesis. This is Elongation factor Tu from Streptococcus sanguinis (strain SK36).